A 799-amino-acid chain; its full sequence is Signal transducer and activator of transcription 5A (799 aa).

At Y90 the chain carries Phosphotyrosine. S128 carries the post-translational modification Phosphoserine. Residues 589–686 (WNDGAILGFV…EVFSKYYTPV (98 aa)) enclose the SH2 domain. Position 682 is a phosphotyrosine (Y682). Y699 carries the post-translational modification Phosphotyrosine; by JAK2. Residues 778-799 (DSLDPRLSPPAGLFASTRGSLS) are disordered. S785 bears the Phosphoserine mark.

The protein belongs to the transcription factor STAT family. Forms a homodimer or a heterodimer with a related family member. Binds NR3C1. Interacts with NCOA1 and SOCS7. Interacts with ERBB4. Interacts with EBF4. Interacts with CD69. In terms of processing, ISGylated. Post-translationally, tyrosine phosphorylated in response to KITLG/SCF, IL2, IL3, IL7, IL15, CSF2/GMCSF, GH1, PRL, EPO and THPO. Activated KIT promotes phosphorylation on tyrosine residues and subsequent translocation to the nucleus. Tyrosine phosphorylated in response to constitutively activated FGFR1, FGFR2, FGFR3 and FGFR4. Tyrosine phosphorylation is required for DNA-binding activity and dimerization. Serine phosphorylation is also required for maximal transcriptional activity. Tyrosine phosphorylated in response to signaling via activated FLT3; wild-type FLT3 results in much weaker phosphorylation than constitutively activated mutant FLT3. Alternatively, can be phosphorylated by JAK2 at Tyr-699.

The protein localises to the cytoplasm. The protein resides in the nucleus. Its function is as follows. Carries out a dual function: signal transduction and activation of transcription. Mediates cellular responses to the cytokine KITLG/SCF and other growth factors. May mediate cellular responses to activated FGFR1, FGFR2, FGFR3 and FGFR4. Binds to the GAS element and activates PRL-induced transcription. Regulates the expression of milk proteins during lactation. The chain is Signal transducer and activator of transcription 5A (STAT5A) from Sus scrofa (Pig).